Here is a 153-residue protein sequence, read N- to C-terminus: Jacalin-related lectin Calsepa (153 aa).

Alanine 2 is modified (N-acetylalanine). The 147-residue stretch at 6–152 (DTISGPWGNN…VDAIGTYNRH (147 aa)) folds into the Jacalin-type lectin domain. N-glycan binding stretches follow at residues 17–18 (GN), 95–96 (DN), and 140–144 (GYYVD).

The protein belongs to the jacalin lectin family. Homodimer. Not glycosylated. Rhizome (at protein level). Detected in the cortex and the pith of rhizome. Not detected in vascular tissues, pericycle, endodermis or rhizodermis.

The protein localises to the cytoplasm. Its activity is regulated as follows. Hemagglutinating activity is most inhibited by methyl alpha-mannopyranoside. This activity is inhibited to a less extent (about a third of the inhibition of that of methyl alpha-mannopyranoside) by methyl alpha-glucoside, other alpha-glucosides, such as maltose, isomaltose, panose or palatinose, and alpha-glucosides modified at the second position, such as methyl 2-deoxy-alpha-arabinoglucopyranoside or methyl 2-acetamido-2-deoxy alpha-glucopyranoside. Mildly inhibited by free monosaccharides, with glucose presenting at least 20-fold less inhibitory effect on hemagglutinating activity than mannose. Glycoproteins are somewhat inhibitory, the best being asialothyroglobulin and ovomucoid. Not inhibited by isomaltitol, sucrose or trehalose. Its function is as follows. Mannose-binding lectin. Preferentially binds mannose at concentrations ranging between 5 and 25 mM, but also binds glucose. Has a marked preference for methylated sugar derivatives, such as alpha-MeMan and alpha-MeGlc, at concentration down to 5 mM. Binds to N-glycans, but not to glycolipid-type or other type of glycans. Binds N-linked high-mannose-type glycans. Has a preference for smaller (Man(2)-Man(6)) high-mannose-type glycans to larger (Man(7)-Man(9)) ones. Recognizes both alpha1-6 extended and alpha1-3 extended monoantennary glycans. The addition of alpha1-2Man to the Man-alpha1-3Man-beta branch results in a significant loss of affinity, but beta1-2GlcNAc has some affinity. Has less affinity for biantennary glycans. However, affinity is significant for the biantennary complex-type N-glycans with bisecting GlcNAc. No affinity is observed for tri- and tetra-antennary glycans. Binds bisected glycans of the mouse brain. Selectively binds to bisecting N-glycans which are in back-fold conformation, and does not favor a glycan with an extend conformation. Has hemagglutinating activity against rabbit erythrocytes at 0.3 ug/ml and against trypsin-treated human erythrocytes at 5 ug/ml. Has mitogenic activity in murine cells. The protein is Jacalin-related lectin Calsepa of Calystegia sepium (Hedge bindweed).